The following is a 134-amino-acid chain: MKAFSPVRSVRKNSLSDHSLGISRSKTPVDDPMSLLYNMNDCYSKLKELVPSIPQNKKVSKMEILQHVIDYILDLQIALDSHPTIVSLHHQRPGQNQASRTPLTTLNTDISILSLQASEFPSELMSNDSKALCG.

Phosphoserine is present on residues S14 and S25. The region spanning 23–75 (SRSKTPVDDPMSLLYNMNDCYSKLKELVPSIPQNKKVSKMEILQHVIDYILDL) is the bHLH domain. The Nuclear export signal motif lies at 106-115 (LNTDISILSL).

As to quaternary structure, interacts with GATA4 and NKX2-5. Interacts with NR0B2. Interacts with CLOCK and BMAL1. Interacts with IFI204. Interacts with NEDD9/HEF1. Interacts with ASB4; this interaction promotes ID2 proteasomal degradation. Ubiquitinated in a ASB4-depedent manner, leading to proteasomal degradation. Post-translationally, phosphorylated in vitro by CDK1, PKA and PKC. In terms of tissue distribution, highly expressed in early fetal tissues, including those of the central nervous system.

It is found in the cytoplasm. The protein localises to the nucleus. In terms of biological role, transcriptional regulator (lacking a basic DNA binding domain) which negatively regulates the basic helix-loop-helix (bHLH) transcription factors by forming heterodimers and inhibiting their DNA binding and transcriptional activity. Implicated in regulating a variety of cellular processes, including cellular growth, senescence, differentiation, apoptosis, angiogenesis, and neoplastic transformation. Inhibits skeletal muscle and cardiac myocyte differentiation. Regulates the circadian clock by repressing the transcriptional activator activity of the CLOCK-BMAL1 heterodimer. Restricts the CLOCK and BMAL1 localization to the cytoplasm. Plays a role in both the input and output pathways of the circadian clock: in the input component, is involved in modulating the magnitude of photic entrainment and in the output component, contributes to the regulation of a variety of liver clock-controlled genes involved in lipid metabolism. This Homo sapiens (Human) protein is DNA-binding protein inhibitor ID-2 (ID2).